A 678-amino-acid polypeptide reads, in one-letter code: Glycine--tRNA ligase beta subunit (678 aa).

It belongs to the class-II aminoacyl-tRNA synthetase family. Tetramer of two alpha and two beta subunits.

The protein resides in the cytoplasm. The catalysed reaction is tRNA(Gly) + glycine + ATP = glycyl-tRNA(Gly) + AMP + diphosphate. The protein is Glycine--tRNA ligase beta subunit of Streptococcus pneumoniae (strain ATCC 700669 / Spain 23F-1).